A 131-amino-acid chain; its full sequence is Small ribosomal subunit protein uS8 (131 aa).

This sequence belongs to the universal ribosomal protein uS8 family. As to quaternary structure, part of the 30S ribosomal subunit. Contacts proteins S5 and S12.

Its function is as follows. One of the primary rRNA binding proteins, it binds directly to 16S rRNA central domain where it helps coordinate assembly of the platform of the 30S subunit. The polypeptide is Small ribosomal subunit protein uS8 (Legionella pneumophila subsp. pneumophila (strain Philadelphia 1 / ATCC 33152 / DSM 7513)).